Reading from the N-terminus, the 231-residue chain is 5'-methylthioadenosine/S-adenosylhomocysteine nucleosidase (231 aa).

Glutamate 12 acts as the Proton acceptor in catalysis. Substrate contacts are provided by residues glycine 78, methionine 153, and 174–175; that span reads ME. The active-site Proton donor is aspartate 198.

The protein belongs to the PNP/UDP phosphorylase family. MtnN subfamily.

The catalysed reaction is S-adenosyl-L-homocysteine + H2O = S-(5-deoxy-D-ribos-5-yl)-L-homocysteine + adenine. The enzyme catalyses S-methyl-5'-thioadenosine + H2O = 5-(methylsulfanyl)-D-ribose + adenine. It catalyses the reaction 5'-deoxyadenosine + H2O = 5-deoxy-D-ribose + adenine. Its pathway is amino-acid biosynthesis; L-methionine biosynthesis via salvage pathway; S-methyl-5-thio-alpha-D-ribose 1-phosphate from S-methyl-5'-thioadenosine (hydrolase route): step 1/2. In terms of biological role, catalyzes the irreversible cleavage of the glycosidic bond in both 5'-methylthioadenosine (MTA) and S-adenosylhomocysteine (SAH/AdoHcy) to adenine and the corresponding thioribose, 5'-methylthioribose and S-ribosylhomocysteine, respectively. Also cleaves 5'-deoxyadenosine, a toxic by-product of radical S-adenosylmethionine (SAM) enzymes, into 5-deoxyribose and adenine. The polypeptide is 5'-methylthioadenosine/S-adenosylhomocysteine nucleosidase (Bacillus thuringiensis subsp. konkukian (strain 97-27)).